Here is a 316-residue protein sequence, read N- to C-terminus: Protoheme IX farnesyltransferase (316 aa).

The next 9 helical transmembrane spans lie at Ile-28–Val-48, Pro-50–Leu-70, His-99–Val-119, Leu-122–Leu-142, Ile-150–Gly-170, Ile-178–Ile-198, Ile-223–Ala-243, Cys-244–Trp-264, and Ala-293–Phe-313.

Belongs to the UbiA prenyltransferase family. Protoheme IX farnesyltransferase subfamily.

It localises to the cell inner membrane. The enzyme catalyses heme b + (2E,6E)-farnesyl diphosphate + H2O = Fe(II)-heme o + diphosphate. It participates in porphyrin-containing compound metabolism; heme O biosynthesis; heme O from protoheme: step 1/1. Functionally, converts heme B (protoheme IX) to heme O by substitution of the vinyl group on carbon 2 of heme B porphyrin ring with a hydroxyethyl farnesyl side group. This chain is Protoheme IX farnesyltransferase, found in Microcystis aeruginosa (strain NIES-843 / IAM M-2473).